Consider the following 58-residue polypeptide: Small ribosomal subunit protein bS21 (58 aa).

The segment at 35–58 (REHYEKPSVKRKKKSEAARKRKFK) is disordered. Positions 43–58 (VKRKKKSEAARKRKFK) are enriched in basic residues.

The protein belongs to the bacterial ribosomal protein bS21 family.

The polypeptide is Small ribosomal subunit protein bS21 (Ruminiclostridium cellulolyticum (strain ATCC 35319 / DSM 5812 / JCM 6584 / H10) (Clostridium cellulolyticum)).